A 60-amino-acid polypeptide reads, in one-letter code: Large ribosomal subunit protein bL32 (60 aa).

The span at 1 to 20 shows a compositional bias: basic residues; the sequence is MACPKKKTSKSKRSMRRAAW. A disordered region spans residues 1-22; it reads MACPKKKTSKSKRSMRRAAWKR.

It belongs to the bacterial ribosomal protein bL32 family.

This Thermosynechococcus vestitus (strain NIES-2133 / IAM M-273 / BP-1) protein is Large ribosomal subunit protein bL32.